Consider the following 418-residue polypeptide: MLYSLFYFLSSLNVPGARLFRYISFRSVLSFSLSLIISVLIGERIIRFLQRHQAGETIRNLGLEGQIQKKGTPTMGGIIIIIAILIPVLLLARLSNIYVLLMLITTIWLGILGLIDDCIKVIWKHKEGLSGKIKIIAQVGLGLIVGLIVYLSPNIVMYENVEIRQQGGRKTVSYTPPLKSTQTTVPFFKNNNLDYRDLTAFMTNHRTAATWILFVLITVFIVTAVSNGANLTDGLDGLTAGSSAIIGVVLGILAYVSANLGFAAYLNIMYIPGCGELTVFASAFVGACMGFLWHNAFPAQVFMGDIGSLTLGGIIAVFAIIIHKELLLPMLCGIFFTESLSVMIQVAYFKYSKRKTGMGKRIFKMTPIHHHFQKGGSEEVNVIIQKPLNAIPESKIVVRFWLIGILLAALTVVTLKIR.

Transmembrane regions (helical) follow at residues 22–42 (YISF…VLIG), 72–92 (TPTM…LLLA), 95–115 (SNIY…LGLI), 135–155 (IIAQ…SPNI), 208–228 (AATW…VSNG), 244–264 (AIIG…GFAA), 277–297 (LTVF…HNAF), 302–322 (FMGD…AIII), 326–346 (LLLP…MIQV), and 395–415 (KIVV…VVTL).

It belongs to the glycosyltransferase 4 family. MraY subfamily. Requires Mg(2+) as cofactor.

It is found in the cell inner membrane. It catalyses the reaction UDP-N-acetyl-alpha-D-muramoyl-L-alanyl-gamma-D-glutamyl-meso-2,6-diaminopimeloyl-D-alanyl-D-alanine + di-trans,octa-cis-undecaprenyl phosphate = di-trans,octa-cis-undecaprenyl diphospho-N-acetyl-alpha-D-muramoyl-L-alanyl-D-glutamyl-meso-2,6-diaminopimeloyl-D-alanyl-D-alanine + UMP. The protein operates within cell wall biogenesis; peptidoglycan biosynthesis. Functionally, catalyzes the initial step of the lipid cycle reactions in the biosynthesis of the cell wall peptidoglycan: transfers peptidoglycan precursor phospho-MurNAc-pentapeptide from UDP-MurNAc-pentapeptide onto the lipid carrier undecaprenyl phosphate, yielding undecaprenyl-pyrophosphoryl-MurNAc-pentapeptide, known as lipid I. This chain is Phospho-N-acetylmuramoyl-pentapeptide-transferase, found in Azobacteroides pseudotrichonymphae genomovar. CFP2.